A 164-amino-acid chain; its full sequence is Respiratory growth induced protein 2 (164 aa).

This sequence belongs to the RGI1 family.

The protein resides in the cytoplasm. Functionally, involved in the control of energetic metabolism and significantly contribute to cell fitness, especially under respiratory growth conditions. In Saccharomyces cerevisiae (strain RM11-1a) (Baker's yeast), this protein is Respiratory growth induced protein 2 (RGI2).